The following is a 481-amino-acid chain: Transmembrane protein 39A (481 aa).

The next 8 membrane-spanning stretches (helical) occupy residues Leu74–Ile94, Ser109–Leu129, Leu150–Leu170, Ser182–Leu202, Glu278–Val298, Leu313–Tyr333, Leu411–Leu431, and Asn437–Leu457.

It belongs to the TMEM39 family.

Its subcellular location is the endoplasmic reticulum membrane. Its function is as follows. Regulates autophagy by controlling the spatial distribution and levels of the intracellular phosphatidylinositol 4-phosphate (PtdIns(4)P) pools. Modulates (PtdIns(4)P) levels by regulating the ER-to-Golgi trafficking of the phosphatidylinositide phosphatase SACM1L. This is Transmembrane protein 39A (tmem39a) from Danio rerio (Zebrafish).